A 230-amino-acid chain; its full sequence is LexA repressor (230 aa).

Positions 28-48 (LREIGAHMGIRSTNGVNDHLR) form a DNA-binding region, H-T-H motif. Residues serine 149 and lysine 186 each act as for autocatalytic cleavage activity in the active site.

Belongs to the peptidase S24 family. As to quaternary structure, homodimer.

It catalyses the reaction Hydrolysis of Ala-|-Gly bond in repressor LexA.. In terms of biological role, represses a number of genes involved in the response to DNA damage (SOS response), including recA and lexA. In the presence of single-stranded DNA, RecA interacts with LexA causing an autocatalytic cleavage which disrupts the DNA-binding part of LexA, leading to derepression of the SOS regulon and eventually DNA repair. The sequence is that of LexA repressor from Sorangium cellulosum (strain So ce56) (Polyangium cellulosum (strain So ce56)).